The following is a 260-amino-acid chain: WUSCHEL-related homeobox 2 (260 aa).

Positions 10 to 74 (ASSSRWNPTK…NHKARQRQKQ (65 aa)) form a DNA-binding region, homeobox; WUS-type.

The protein belongs to the WUS homeobox family.

It localises to the nucleus. Probable transcription factor involved in embryonic patterning. Required for apical embryo development after fertilization. Its specific localization to the apical daughter cell of the zygote, while WOX8 is confined to the basal cell, suggests that the asymmetric division of the plant zygote separates determinants of apical and basal cell fates. This is WUSCHEL-related homeobox 2 (WOX2) from Arabidopsis thaliana (Mouse-ear cress).